Here is a 472-residue protein sequence, read N- to C-terminus: Siroheme synthase 1 (472 aa).

A precorrin-2 dehydrogenase /sirohydrochlorin ferrochelatase region spans residues 1-203 (MDYLPLFADL…GQLTEAENEL (203 aa)). NAD(+)-binding positions include 22-23 (EV) and 43-44 (QT). Residue Ser-128 is modified to Phosphoserine. Positions 215–472 (GEVALVGAGP…AISPSVVNLA (258 aa)) are uroporphyrinogen-III C-methyltransferase. Residue Pro-224 participates in S-adenosyl-L-methionine binding. The active-site Proton acceptor is Asp-247. Lys-269 acts as the Proton donor in catalysis. S-adenosyl-L-methionine-binding positions include 300-302 (GGD), Ile-305, 330-331 (TA), Met-382, and Gly-411.

This sequence in the N-terminal section; belongs to the precorrin-2 dehydrogenase / sirohydrochlorin ferrochelatase family. The protein in the C-terminal section; belongs to the precorrin methyltransferase family.

It carries out the reaction uroporphyrinogen III + 2 S-adenosyl-L-methionine = precorrin-2 + 2 S-adenosyl-L-homocysteine + H(+). The enzyme catalyses precorrin-2 + NAD(+) = sirohydrochlorin + NADH + 2 H(+). The catalysed reaction is siroheme + 2 H(+) = sirohydrochlorin + Fe(2+). The protein operates within cofactor biosynthesis; adenosylcobalamin biosynthesis; precorrin-2 from uroporphyrinogen III: step 1/1. It participates in cofactor biosynthesis; adenosylcobalamin biosynthesis; sirohydrochlorin from precorrin-2: step 1/1. Its pathway is porphyrin-containing compound metabolism; siroheme biosynthesis; precorrin-2 from uroporphyrinogen III: step 1/1. It functions in the pathway porphyrin-containing compound metabolism; siroheme biosynthesis; siroheme from sirohydrochlorin: step 1/1. The protein operates within porphyrin-containing compound metabolism; siroheme biosynthesis; sirohydrochlorin from precorrin-2: step 1/1. Its function is as follows. Multifunctional enzyme that catalyzes the SAM-dependent methylations of uroporphyrinogen III at position C-2 and C-7 to form precorrin-2 via precorrin-1. Then it catalyzes the NAD-dependent ring dehydrogenation of precorrin-2 to yield sirohydrochlorin. Finally, it catalyzes the ferrochelation of sirohydrochlorin to yield siroheme. This chain is Siroheme synthase 1, found in Yersinia pseudotuberculosis serotype I (strain IP32953).